Reading from the N-terminus, the 223-residue chain is Ubiquinone biosynthesis protein COQ4 homolog 2, mitochondrial (223 aa).

The N-terminal 26 residues, 1–26 (MFLRRVHPVRLGHAIQRSLTTTKSRN), are a transit peptide targeting the mitochondrion. Positions 21-32 (TTKSRNESTTTT) are enriched in low complexity. A disordered region spans residues 21 to 43 (TTKSRNESTTTTVEAPQAVPSPP). Zn(2+) contacts are provided by His177, Asp178, His181, and Glu193.

The protein belongs to the COQ4 family. In terms of assembly, component of a multi-subunit COQ enzyme complex. Zn(2+) serves as cofactor.

The protein localises to the mitochondrion inner membrane. The enzyme catalyses a 4-hydroxy-3-methoxy-5-(all-trans-polyprenyl)benzoate + H(+) = a 2-methoxy-6-(all-trans-polyprenyl)phenol + CO2. Its pathway is cofactor biosynthesis; ubiquinone biosynthesis. In terms of biological role, lyase that catalyzes the C1-decarboxylation of 4-hydroxy-3-methoxy-5-(all-trans-polyprenyl)benzoic acid into 2-methoxy-6-(all-trans-polyprenyl)phenol during ubiquinone biosynthesis. This chain is Ubiquinone biosynthesis protein COQ4 homolog 2, mitochondrial, found in Culex quinquefasciatus (Southern house mosquito).